Consider the following 189-residue polypeptide: Elongation factor P (189 aa).

N6-(3,6-diaminohexanoyl)-5-hydroxylysine is present on K34.

This sequence belongs to the elongation factor P family. May be beta-lysylated on the epsilon-amino group of Lys-34 by the combined action of EpmA and EpmB, and then hydroxylated on the C5 position of the same residue by EpmC (if this protein is present). Lysylation is critical for the stimulatory effect of EF-P on peptide-bond formation. The lysylation moiety may extend toward the peptidyltransferase center and stabilize the terminal 3-CCA end of the tRNA. Hydroxylation of the C5 position on Lys-34 may allow additional potential stabilizing hydrogen-bond interactions with the P-tRNA.

It is found in the cytoplasm. Its pathway is protein biosynthesis; polypeptide chain elongation. In terms of biological role, involved in peptide bond synthesis. Alleviates ribosome stalling that occurs when 3 or more consecutive Pro residues or the sequence PPG is present in a protein, possibly by augmenting the peptidyl transferase activity of the ribosome. Modification of Lys-34 is required for alleviation. This chain is Elongation factor P, found in Dichelobacter nodosus (strain VCS1703A).